An 83-amino-acid chain; its full sequence is CLAVATA3/ESR (CLE)-related protein 3 (83 aa).

The first 24 residues, 1-24 (MASLKLWVCLVLLLVLELTSVHEC), serve as a signal peptide directing secretion. Residues 38-58 (RLKKIRRELFERLKEMKGRSE) are a coiled coil. Positions 53 to 83 (MKGRSEGEETILGNTLDSKRLSPGGPDPRHH) are disordered. Residues proline 75 and proline 78 each carry the hydroxyproline modification. A glycan (O-linked (Ara...) hydroxyproline) is linked at proline 78.

This sequence belongs to the CLV3/ESR signal peptide family. In terms of processing, the O-glycosylation (arabinosylation) of the hydroxyproline Pro-78 enhances binding affinity of the CLE3p peptide for its receptor. In terms of tissue distribution, mostly expressed in roots, stems and apex, and, to a lower extent, in seedlings, leaves, flowers, siliques and pollen.

It is found in the secreted. The protein localises to the extracellular space. In terms of biological role, extracellular signal peptide that regulates cell fate. This chain is CLAVATA3/ESR (CLE)-related protein 3, found in Arabidopsis thaliana (Mouse-ear cress).